We begin with the raw amino-acid sequence, 855 residues long: Valine--tRNA ligase (855 aa).

The short motif at 44 to 54 (PYPTGNFHIGN) is the 'HIGH' region element. The short motif at 522–526 (KMSKS) is the 'KMSKS' region element. Lys525 lines the ATP pocket.

It belongs to the class-I aminoacyl-tRNA synthetase family. ValS type 2 subfamily.

The protein localises to the cytoplasm. It catalyses the reaction tRNA(Val) + L-valine + ATP = L-valyl-tRNA(Val) + AMP + diphosphate. Catalyzes the attachment of valine to tRNA(Val). As ValRS can inadvertently accommodate and process structurally similar amino acids such as threonine, to avoid such errors, it has a 'posttransfer' editing activity that hydrolyzes mischarged Thr-tRNA(Val) in a tRNA-dependent manner. In Methanothrix thermoacetophila (strain DSM 6194 / JCM 14653 / NBRC 101360 / PT) (Methanosaeta thermophila), this protein is Valine--tRNA ligase.